Reading from the N-terminus, the 229-residue chain is Synaptogyrin-3 (229 aa).

M1 bears the N-acetylmethionine mark. Residues 20 to 172 (FARRPQTLLR…LTVKALQRFR (153 aa)) form the MARVEL domain. A run of 4 helical transmembrane segments spans residues 30-50 (VASWVFSIAVFGPIVNEGYVN), 70-90 (FGVALGLGAFLACAAFLLLDV), 105-125 (VLLDLGFSGLWSFLWFVGFCF), and 148-168 (AAIAFSFFSILSWVALTVKAL). The segment covering 209 to 219 (QSPPFTETLDT) has biased composition (polar residues). The interval 209–229 (QSPPFTETLDTSPKGYQVPAY) is disordered.

The protein belongs to the synaptogyrin family. As to quaternary structure, interacts (via N-terminus) with SLC6A3 (via N-terminus). May interact with VMAT2. Expressed in brain and placenta.

Its subcellular location is the cytoplasmic vesicle. The protein resides in the secretory vesicle. It localises to the synaptic vesicle membrane. The protein localises to the synapse. Its function is as follows. May play a role in regulated exocytosis. May indirectly regulate the activity of the plasma membrane dopamine transporter SLC6A3 and thereby regulate dopamine transport back from the synaptic cleft into the presynaptic terminal. This Homo sapiens (Human) protein is Synaptogyrin-3.